A 548-amino-acid chain; its full sequence is Solute carrier family 22 member 7 (548 aa).

A helical membrane pass occupies residues 21–41; sequence VALLALPRVLLPLHFLLPIFL. An N-linked (GlcNAc...) asparagine glycan is attached at N91. Transmembrane regions (helical) follow at residues 146 to 166, 180 to 200, 204 to 224, 234 to 254, 259 to 279, 346 to 366, 376 to 397, 404 to 423, 432 to 452, 466 to 486, and 493 to 513; these read AASTFFFAGVLVGAVAFGYLS, VSTLVLGLASAASVSYVMFAI, LTGSALAGFTIIVMPLELEWL, VLSSTFWTGGVMLLALVGYLI, WLLLAVTLPCAPGILSLWWVP, ISLCCVVVWFGVNFSYYGLSL, YQTQLLFGAVELPSKLLVYLSV, LTQAGTLLGTALAFGTRLLV, TVLAVMGKAFSEAAFTTAYLF, MGLTALVGRLGGSLAPLAALL, and LPKLTYGGIALLAAGTALLLP. F441 serves as the catalytic Important for glutamate counteranion efflux. Residues 522–548 form a disordered region; sequence ETIQDVERKSAPTSLQEEEMPMKQVQN.

Belongs to the major facilitator (TC 2.A.1) superfamily. Organic cation transporter (TC 2.A.1.19) family. Mainly expressed in liver and kidney. In kidney, expressed in proximal tubular cells. Also expressed in pancreas, small intestine, spinal cord, lung, brain and heart. Expressed in fetal liver.

It is found in the basolateral cell membrane. It localises to the apical cell membrane. The protein localises to the cell membrane. Its subcellular location is the cytoplasm. The protein resides in the cytosol. It catalyses the reaction orotate(out) + L-glutamate(in) = orotate(in) + L-glutamate(out). The catalysed reaction is 3',5'-cyclic GMP(in) = 3',5'-cyclic GMP(out). It carries out the reaction GMP(in) = GMP(out). The enzyme catalyses 2'-deoxyguanosine(in) = 2'-deoxyguanosine(out). It catalyses the reaction GDP(in) = GDP(out). The catalysed reaction is guanosine(in) = guanosine(out). It carries out the reaction GTP(in) = GTP(out). The enzyme catalyses 3',5'-cyclic AMP(in) = 3',5'-cyclic AMP(out). It catalyses the reaction creatinine(in) = creatinine(out). The catalysed reaction is prostaglandin E2(out) = prostaglandin E2(in). It carries out the reaction 2-oxoglutarate(in) = 2-oxoglutarate(out). The enzyme catalyses glutarate(in) = glutarate(out). It catalyses the reaction urate(out) = urate(in). The catalysed reaction is estrone 3-sulfate(out) = estrone 3-sulfate(in). It carries out the reaction prostaglandin F2alpha(out) = prostaglandin F2alpha(in). Functionally, functions as a Na(+)-independent bidirectional multispecific transporter. Contributes to the renal and hepatic elimination of endogenous organic compounds from the systemic circulation into the urine and bile, respectively. Capable of transporting a wide range of purine and pyrimidine nucleobases, nucleosides and nucleotides, with cGMP, 2'deoxyguanosine and GMP being the preferred substrates. Functions as a pH- and chloride-independent cGMP bidirectional facilitative transporter that can regulate both intracellular and extracellular levels of cGMP and may be involved in cGMP signaling pathways. Mediates orotate/glutamate bidirectional exchange and most likely display a physiological role in hepatic release of glutamate into the blood. Involved in renal secretion and possible reabsorption of creatinine. Able to uptake prostaglandin E2 (PGE2) and may contribute to PGE2 renal excretion. Also transports alpha-ketoglutarate and urate. Apart from the orotate/glutamate exchange, the counterions for the uptake of other SLC22A7/OAT2 substrates remain to be identified. In terms of biological role, non functional transporter. Its function is as follows. Involved in the uptake of prostaglandin F2-alpha (PGF2-alpha). This chain is Solute carrier family 22 member 7, found in Homo sapiens (Human).